We begin with the raw amino-acid sequence, 896 residues long: Bifunctional glutamine synthetase adenylyltransferase/adenylyl-removing enzyme (896 aa).

The adenylyl removase stretch occupies residues methionine 1–glutamate 411. The adenylyl transferase stretch occupies residues asparagine 417–alanine 896.

Belongs to the GlnE family. It depends on Mg(2+) as a cofactor.

The enzyme catalyses [glutamine synthetase]-O(4)-(5'-adenylyl)-L-tyrosine + phosphate = [glutamine synthetase]-L-tyrosine + ADP. It carries out the reaction [glutamine synthetase]-L-tyrosine + ATP = [glutamine synthetase]-O(4)-(5'-adenylyl)-L-tyrosine + diphosphate. Its function is as follows. Involved in the regulation of glutamine synthetase GlnA, a key enzyme in the process to assimilate ammonia. When cellular nitrogen levels are high, the C-terminal adenylyl transferase (AT) inactivates GlnA by covalent transfer of an adenylyl group from ATP to specific tyrosine residue of GlnA, thus reducing its activity. Conversely, when nitrogen levels are low, the N-terminal adenylyl removase (AR) activates GlnA by removing the adenylyl group by phosphorolysis, increasing its activity. The regulatory region of GlnE binds the signal transduction protein PII (GlnB) which indicates the nitrogen status of the cell. This is Bifunctional glutamine synthetase adenylyltransferase/adenylyl-removing enzyme from Neisseria meningitidis serogroup A / serotype 4A (strain DSM 15465 / Z2491).